Here is a 185-residue protein sequence, read N- to C-terminus: UPF0301 protein PSHAa2600 (185 aa).

Belongs to the UPF0301 (AlgH) family.

In Pseudoalteromonas translucida (strain TAC 125), this protein is UPF0301 protein PSHAa2600.